Reading from the N-terminus, the 377-residue chain is Apelin receptor (377 aa).

Residues 1–28 (MEDDGYNYYGADNQSECDYADWKPSGAL) lie on the Extracellular side of the membrane. N-linked (GlcNAc...) asparagine glycosylation occurs at Asn-13. Cystine bridges form between Cys-17–Cys-279 and Cys-100–Cys-179. Residues 29 to 52 (IPAIYMLVFLLGTTGNGLVLWTVF) form a helical membrane-spanning segment. Topologically, residues 53–62 (RTSREKRRSA) are cytoplasmic. The helical transmembrane segment at 63–84 (DIFIASLAVADLTFVVTLPLWA) threads the bilayer. The Extracellular portion of the chain corresponds to 85–97 (TYTYREFDWPFGT). A helical transmembrane segment spans residues 98–123 (FSCKLSSYLIFVNMYASVFCLTGLSF). At 124-144 (DRYLAIVRPVANARLRLRVSG) the chain is on the cytoplasmic side. The chain crosses the membrane as a helical span at residues 145 to 162 (AVATAVLWVLAALLAVPV). Residues 163–196 (MVFRSTDASENGTKIQCYMDYSMVATSNSEWAWE) are Extracellular-facing. Residue Asn-173 is glycosylated (N-linked (GlcNAc...) asparagine). Residues 197–221 (VGLGVSSTAVGFVVPFTIMLTCYFF) traverse the membrane as a helical segment. Residues 222–244 (IAQTIAGHFRKERIEGLRKRRRL) lie on the Cytoplasmic side of the membrane. A helical membrane pass occupies residues 245 to 268 (LSIIVVLVVTFALCWMPYHLVKTL). Topologically, residues 269-287 (YMLGSLLHWPCDFDIFLMN) are extracellular. The chain crosses the membrane as a helical span at residues 288–310 (VFPYCTCISYVNSCLNPFLYAFF). The Cytoplasmic segment spans residues 311–377 (DPRFRQACTS…IPYSQETLVD (67 aa)). Residues 334–377 (HSSSAEKSASYSSGHSQGPGPNMGKGGEQMHEKSIPYSQETLVD) form a disordered region. Residues 335-349 (SSSAEKSASYSSGHS) are compositionally biased toward low complexity.

It belongs to the G-protein coupled receptor 1 family. As to quaternary structure, homodimer; dimerization inhibits APLNR-mediated G protein and beta-arrestin signaling pathways compared to monomeric APLNR. Expressed in coronary endothelial cells (at protein level). Expressed in the embryo, allantoic and endothelial precursor cells of the yolk sac at 8 days post-coitum (dpc). Expressed in the secondary heart field and somite at 8.25 dpc. Expressed in fetal allantoic endothelial cells at 9 dpc. Expressed in the allantoid and the invading fetal vasculature of the placenta at 9.5 dpc. Expressed in endothelial cells adjacent to syncytiotrophoblast cells at 10.5 dpc. Expressed weakly in the embryonic heart at 11.5 dpc. Expressed in the adult heart. Expressed in endothelial cells and cardiomyocytes and weakly expressed in fibroblasts.

It is found in the cell membrane. Functionally, g protein-coupled receptor for peptide hormones apelin (APLN) and apelin receptor early endogenous ligand (APELA), that plays a role in the regulation of normal cardiovascular function and fluid homeostasis. When acting as apelin receptor, activates both G(i) protein pathway that inhibits adenylate cyclase activity, and the beta-arrestin pathway leading to internalization of the receptor. APLNR/APJ receptor is also activated by mechanical strech in a G-protein-independent fashion to induce beta-arrestin signaling leading to cardiac hypertrophy. However, the presence of apelin ligand blunts cardiac hypertrophic induction from APLNR/APJ on response to pathological stimuli. Plays a key role in early development such as gastrulation, blood vessels formation and heart morphogenesis by acting as a receptor for APELA hormone. May promote angioblast migration toward the embryonic midline, i.e. the position of the future vessel formation, during vasculogenesis. Promotes sinus venosus (SV)-derived endothelial cells migration into the developing heart to promote coronary blood vessel development. Also plays a role in various processes in adults such as regulation of blood vessel formation, blood pressure and heart contractility and protection from cardiac hypertrophy and heart failure. The protein is Apelin receptor of Mus musculus (Mouse).